The primary structure comprises 557 residues: Fanconi anemia group C protein homolog (557 aa).

Belongs to the multisubunit FA complex composed of FANCA, FANCB, FANCC, FANCE, FANCF, FANCG, FANCL/PHF9 and FANCM. This complex may also include HSP70. Interacts with ZBTB32. Upon IFNG induction, interacts with STAT1. Interacts with CDK1. Interacts with EIF2AK2.

Its subcellular location is the nucleus. It localises to the cytoplasm. In terms of biological role, DNA repair protein that may operate in a postreplication repair or a cell cycle checkpoint function. May be implicated in interstrand DNA cross-link repair and in the maintenance of normal chromosome stability. Upon IFNG induction, may facilitate STAT1 activation by recruiting STAT1 to IFNGR1. In Rattus norvegicus (Rat), this protein is Fanconi anemia group C protein homolog (Fancc).